Consider the following 165-residue polypeptide: Endoribonuclease YbeY (165 aa).

Residues His-119, His-123, and His-129 each coordinate Zn(2+).

Belongs to the endoribonuclease YbeY family. Zn(2+) is required as a cofactor.

It is found in the cytoplasm. Its function is as follows. Single strand-specific metallo-endoribonuclease involved in late-stage 70S ribosome quality control and in maturation of the 3' terminus of the 16S rRNA. The polypeptide is Endoribonuclease YbeY (Streptomyces griseus subsp. griseus (strain JCM 4626 / CBS 651.72 / NBRC 13350 / KCC S-0626 / ISP 5235)).